A 1103-amino-acid chain; its full sequence is Ubiquitin carboxyl-terminal hydrolase 7 (1103 aa).

Positions 1–11 (MNHQQQQQQQQ) are enriched in low complexity. Disordered stretches follow at residues 1–41 (MNHQ…TQNP) and 46–65 (NVTL…DDTS). The interval 1-209 (MNHQQQQQQQ…APHGVAWDSK (209 aa)) is interaction with TSPYL5. Ser19 bears the Phosphoserine mark. The segment covering 20–32 (EPEDMEMEAGDTD) has biased composition (acidic residues). A phosphoserine mark is found at Ser50 and Ser54. The segment at 54–209 (SNAEEDMEDD…APHGVAWDSK (156 aa)) is interaction with p53/TP53 and MDM2. The MATH domain maps to 69-196 (EATFQFTVER…DDKVTFEVFV (128 aa)). Residues 71-206 (TFQFTVERFS…QADAPHGVAW (136 aa)) are necessary for nuclear localization. A USP domain is found at 215–522 (VGLKNQGATC…NAYMLVYIRE (308 aa)). Cys224 (nucleophile) is an active-site residue. His465 (proton acceptor) is an active-site residue. Position 870 is an N6-acetyllysine; alternate (Lys870). A Glycyl lysine isopeptide (Lys-Gly) (interchain with G-Cter in SUMO2); alternate cross-link involves residue Lys870. Residue Lys870 forms a Glycyl lysine isopeptide (Lys-Gly) (interchain with G-Cter in ubiquitin); alternate linkage. Lys883 is covalently cross-linked (Glycyl lysine isopeptide (Lys-Gly) (interchain with G-Cter in SUMO2)). The residue at position 964 (Ser964) is a Phosphoserine. N6-acetyllysine is present on residues Lys1085 and Lys1097.

It belongs to the peptidase C19 family. In terms of assembly, monomer. Homodimer. Part of a complex with DAXX, MDM2, RASSF1 and USP7. Part of a complex with DAXX, MDM2 and USP7. Interacts with MDM2; the interaction is independent of p53/TP53. Interacts with DAXX; the interaction is direct and independent of MDM2 and p53/TP53. Component of a complex composed of KMT2E, OGT and USP7; the complex stabilizes KMT2E, preventing KMT2E ubiquitination and proteasomal-mediated degradation. Interacts (via MATH domain) with KMT2E. Interacts with OGT. Interacts with FOXO4; the interaction is enhanced in presence of hydrogen peroxide and occurs independently of p53/TP53. Interacts with p53/TP53; the interaction is enhanced in response to DNA damage; the interaction is impaired by TSPYL5. Interacts with PTEN; the interaction is direct. Interacts with ATXN1 and the strength of interaction is influenced by the length of the poly-Gln region in ATXN1. A weaker interaction seen with mutants having longer poly-Gln regions. Interacts with KIAA1530/UVSSA. Interacts with MEX3C and antagonizes its ability to degrade mRNA. Interacts with DNMT1 and UHRF1. Interacts with FOXP3. Interacts (via MATH domain) with RNF220. Associated component of the Polycomb group (PcG) multiprotein PRC1-like complex. Interacts with EPOP. Interacts with OTUD4 and USP9X; the interaction is direct. Interacts with CRY2. Interacts with REST. Interacts with ERCC6. Part of a complex consisting of USP7, MAGEL2 and TRIM27; directly interacts with MAGEL2; directly interacts with TRIM27. In terms of processing, polyneddylated. Not sumoylated. Post-translationally, polyubiquitinated. Ubiquitinated at Lys-870. Widely expressed. High expression is detected in brain, bone marrow, thymus and testis.

It is found in the nucleus. It localises to the cytoplasm. The protein resides in the PML body. The protein localises to the chromosome. It catalyses the reaction Thiol-dependent hydrolysis of ester, thioester, amide, peptide and isopeptide bonds formed by the C-terminal Gly of ubiquitin (a 76-residue protein attached to proteins as an intracellular targeting signal).. Functionally, hydrolase that deubiquitinates target proteins such as ARMC5, FOXO4, DEPTOR, KAT5, p53/TP53, MDM2, ERCC6, DNMT1, UHRF1, PTEN, KMT2E/MLL5 and DAXX. Together with DAXX, prevents MDM2 self-ubiquitination and enhances the E3 ligase activity of MDM2 towards p53/TP53, thereby promoting p53/TP53 ubiquitination and proteasomal degradation. Deubiquitinates p53/TP53, preventing degradation of p53/TP53, and enhances p53/TP53-dependent transcription regulation, cell growth repression and apoptosis. Deubiquitinates p53/TP53 and MDM2 and strongly stabilizes p53/TP53 even in the presence of excess MDM2, and also induces p53/TP53-dependent cell growth repression and apoptosis. Deubiquitination of FOXO4 in presence of hydrogen peroxide is not dependent on p53/TP53 and inhibits FOXO4-induced transcriptional activity. In association with DAXX, is involved in the deubiquitination and translocation of PTEN from the nucleus to the cytoplasm, both processes that are counteracted by PML. Deubiquitinates KMT2E preventing KMT2E proteasomal-mediated degradation. Involved in cell proliferation during early embryonic development. Involved in transcription-coupled nucleotide excision repair (TC-NER) in response to UV damage: recruited to DNA damage sites following interaction with KIAA1530/UVSSA and promotes deubiquitination of ERCC6, preventing UV-induced degradation of ERCC6. Involved in maintenance of DNA methylation via its interaction with UHRF1 and DNMT1: acts by mediating deubiquitination of UHRF1 and DNMT1, preventing their degradation and promoting DNA methylation by DNMT1. Deubiquitinates alkylation repair enzyme ALKBH3. OTUD4 recruits USP7 and USP9X to stabilize ALKBH3, thereby promoting the repair of alkylated DNA lesions. Acts as a chromatin regulator via its association with the Polycomb group (PcG) multiprotein PRC1-like complex; may act by deubiquitinating components of the PRC1-like complex. Able to mediate deubiquitination of histone H2B; it is however unsure whether this activity takes place in vivo. Exhibits a preference towards 'Lys-48'-linked ubiquitin chains. Increases regulatory T-cells (Treg) suppressive capacity by deubiquitinating and stabilizing the transcription factor FOXP3 which is crucial for Treg cell function. Plays a role in the maintenance of the circadian clock periodicity via deubiquitination and stabilization of the CRY1 and CRY2 proteins. Deubiquitinates REST, thereby stabilizing REST and promoting the maintenance of neural progenitor cells. Deubiquitinates SIRT7, inhibiting SIRT7 histone deacetylase activity and regulating gluconeogenesis. Involved in the regulation of WASH-dependent actin polymerization at the surface of endosomes and the regulation of endosomal protein recycling. It maintains optimal WASH complex activity and precise F-actin levels via deubiquitination of TRIM27 and WASHC1. Mediates the deubiquitination of phosphorylated DEPTOR, promoting its stability and leading to decreased mTORC1 signaling. This Mus musculus (Mouse) protein is Ubiquitin carboxyl-terminal hydrolase 7 (Usp7).